Here is a 572-residue protein sequence, read N- to C-terminus: Glutathione hydrolase 1 (572 aa).

Positions 1–22 are cleaved as a signal peptide; that stretch reads MSLVRTVTIVLFIIAFLQNAAA. R99 is an L-glutamate binding site. N-linked (GlcNAc...) asparagine glycosylation is found at N171 and N222. Residue T368 is the Nucleophile of the active site. L-glutamate contacts are provided by residues T386, N388, E407, D410, 440–441, and 461–462; these read SS and GG. N-linked (GlcNAc...) asparagine glycosylation occurs at N505. Positions 552–572 are disordered; it reads GGRSELVAVSDPRKGGFPSGY.

The protein belongs to the gamma-glutamyltransferase family. In terms of tissue distribution, expressed in embryo, roots and leaves. In mature plants, expression is restricted to vascular tissues of roots, leaves, flowers and siliques.

It localises to the secreted. The protein resides in the extracellular space. It is found in the apoplast. The catalysed reaction is an N-terminal (5-L-glutamyl)-[peptide] + an alpha-amino acid = 5-L-glutamyl amino acid + an N-terminal L-alpha-aminoacyl-[peptide]. It carries out the reaction glutathione + H2O = L-cysteinylglycine + L-glutamate. It catalyses the reaction an S-substituted glutathione + H2O = an S-substituted L-cysteinylglycine + L-glutamate. It functions in the pathway sulfur metabolism; glutathione metabolism. Functionally, may play a role in preventing oxidative stress by metabolizing extracellular oxidized glutathione (GSSG). This is Glutathione hydrolase 1 (GGT1) from Arabidopsis thaliana (Mouse-ear cress).